The sequence spans 108 residues: Phosphoribosyl-ATP pyrophosphatase (108 aa).

This sequence belongs to the PRA-PH family.

The protein localises to the cytoplasm. The catalysed reaction is 1-(5-phospho-beta-D-ribosyl)-ATP + H2O = 1-(5-phospho-beta-D-ribosyl)-5'-AMP + diphosphate + H(+). It functions in the pathway amino-acid biosynthesis; L-histidine biosynthesis; L-histidine from 5-phospho-alpha-D-ribose 1-diphosphate: step 2/9. The sequence is that of Phosphoribosyl-ATP pyrophosphatase from Aromatoleum aromaticum (strain DSM 19018 / LMG 30748 / EbN1) (Azoarcus sp. (strain EbN1)).